The chain runs to 3005 residues: Highly reducing polyketide synthase AFT9-1 (3005 aa).

Positions 1-337 (MDPQQRLLLE…GTNAHAILER (337 aa)) constitute a Ketosynthase family 3 (KS3) domain. Residues cysteine 87, histidine 222, and histidine 260 each act as for beta-ketoacyl synthase activity in the active site. A malonyl-CoA:ACP transacylase (MAT) domain region spans residues 437–751 (VFTGQGAQWP…SYMSALVRGS (315 aa)). The tract at residues 821–936 (HDLLGLKMTD…GSVEVKYAAA (116 aa)) is N-terminal hotdog fold. Residues 821–1114 (HDLLGLKMTD…SGLELRRLAP (294 aa)) are dehydratase (DH) domain. The PKS/mFAS DH domain maps to 821–1118 (HDLLGLKMTD…LRRLAPTGQP (298 aa)). The Proton acceptor; for dehydratase activity role is filled by histidine 853. The segment at 963–1118 (IEKISSQELY…LRRLAPTGQP (156 aa)) is C-terminal hotdog fold. Catalysis depends on aspartate 1028, which acts as the Proton donor; for dehydratase activity. Positions 1259–1445 (ADDSSKRCYD…MRKASLNMQL (187 aa)) are methyltransferase (CMet) domain. The tract at residues 1683 to 1985 (EFMKMPVFTE…QHHRNESTVL (303 aa)) is enoyl reductase (ER) (ER) domain. Residues 2008 to 2191 (ATYVVSGGRG…YMSLNVGTIE (184 aa)) form a ketoreductase (KR) domain region. One can recognise a Carrier domain in the interval 2293–2375 (TRDFEKISQL…SLGAKVASRS (83 aa)). An O-(pantetheine 4'-phosphoryl)serine modification is found at serine 2335.

It participates in mycotoxin biosynthesis. Highly reducing polyketide synthase; part of the gene clusters that mediate the biosynthesis of the host-selective toxins (HSTs) AF-toxins responsible for Alternaria black spot of strawberry disease by the strawberry pathotype. AF-toxin I and III are valine derivatives of 2,3-dyhydroxy-isovaleric acid and 2-hydroxy-isovaleric acid respectively, while AF II is an isoleucine derivative of 2-hydroxy-valeric acid. These derivatives are bound to a 9,10-epoxy-8-hydroxy-9-methyl-decatrienoic acid (EDA) moiety. On cellular level, AF-toxins affect plasma membrane of susceptible cells and cause a sudden increase in loss of K(+) after a few minutes of toxin treatment. The aldo-keto reductase AFTS1 catalyzes the conversion of 2-keto-isovaleric acid (2-KIV) to 2-hydroxy-isovaleric acid (2-HIV) by reduction of its ketone to an alcohol. The acyl-CoA ligase AFT1, the hydrolase AFT2 and the enoyl-CoA hydratases AFT3 and AFT6, but also the polyketide synthase AFT9, the acyl-CoA dehydrogenase AFT10, the cytochrome P450 monooxygenase AFT11 and the oxidoreductase AFT12 are all involved in the biosynthesis of the AK-, AF- and ACT-toxin common EDA structural moiety. The exact function of each enzyme, and of additional enzymes identified within the AF-toxin clusters have still to be determined. This Alternaria alternata (Alternaria rot fungus) protein is Highly reducing polyketide synthase AFT9-1.